The primary structure comprises 127 residues: Major sperm protein 33 (127 aa).

Ala2 bears the N-acetylalanine mark. The 118-residue stretch at 9 to 126 (DIQTQPGTKI…RRKNLPIEYN (118 aa)) folds into the MSP domain.

In terms of tissue distribution, sperm.

The protein resides in the cell projection. The protein localises to the pseudopodium. It is found in the cytoplasm. Its subcellular location is the cytoskeleton. Functionally, central component in molecular interactions underlying sperm crawling. Forms an extensive filament system that extends from sperm villipoda, along the leading edge of the pseudopod. The chain is Major sperm protein 33 (msp-33) from Caenorhabditis elegans.